The following is a 643-amino-acid chain: Threonine--tRNA ligase (643 aa).

One can recognise a TGS domain in the interval 1–61 (MPIITLPDGS…EQDATLEIIT (61 aa)). A catalytic region spans residues 243–534 (DHRKIGKALD…ITEEYAGFFP (292 aa)). The Zn(2+) site is built by Cys-334, His-385, and His-511.

The protein belongs to the class-II aminoacyl-tRNA synthetase family. In terms of assembly, homodimer. Zn(2+) is required as a cofactor.

The protein resides in the cytoplasm. The catalysed reaction is tRNA(Thr) + L-threonine + ATP = L-threonyl-tRNA(Thr) + AMP + diphosphate + H(+). Functionally, catalyzes the attachment of threonine to tRNA(Thr) in a two-step reaction: L-threonine is first activated by ATP to form Thr-AMP and then transferred to the acceptor end of tRNA(Thr). Also edits incorrectly charged L-seryl-tRNA(Thr). The sequence is that of Threonine--tRNA ligase from Haemophilus influenzae (strain PittGG).